A 76-amino-acid polypeptide reads, in one-letter code: Dermaseptin-SP2 (76 aa).

Positions 1–22 (MAFLKKSLFLVLFLGLVSLSIC) are cleaved as a signal peptide. A propeptide spanning residues 23 to 45 (EEEKRENEDEEEQEDEEQSEEKR) is cleaved from the precursor. Residues 24–44 (EEKRENEDEEEQEDEEQSEEK) form a disordered region. Positions 30–41 (EDEEEQEDEEQS) are enriched in acidic residues. A Glutamine amide modification is found at Gln73. A propeptide spanning residues 74-76 (GEQ) is cleaved from the precursor.

In terms of tissue distribution, expressed by the skin glands.

The protein localises to the secreted. It localises to the target cell membrane. Functionally, antimicrobial peptide with activity against Gram-positive and Gram-negative bacteria and fungi. Has been tested against E.coli (MIC=2.68-8 uM), S.aureus (ATCC 25923, MIC=2.68-8 uM), S.aureus (ATCC oxacillin resistant, MIC=2.68 uM), K.pneumoniae (MIC=10.71 uM) and C.albicans (MIC=10.71-32 uM). Probably acts by disturbing membrane functions with its alpha-helical amphipathic structure. May penetrate bacterial membranes, but stay at the mammalian membrane surface. Shows a very weak hemolytic activity. The chain is Dermaseptin-SP2 from Agalychnis spurrelli (Gliding leaf frog).